We begin with the raw amino-acid sequence, 257 residues long: 5'-nucleotidase SurE (257 aa).

4 residues coordinate a divalent metal cation: Asp13, Asp14, Ser44, and Asn100.

Belongs to the SurE nucleotidase family. It depends on a divalent metal cation as a cofactor.

It is found in the cytoplasm. It carries out the reaction a ribonucleoside 5'-phosphate + H2O = a ribonucleoside + phosphate. Nucleotidase that shows phosphatase activity on nucleoside 5'-monophosphates. This chain is 5'-nucleotidase SurE, found in Phocaeicola vulgatus (strain ATCC 8482 / DSM 1447 / JCM 5826 / CCUG 4940 / NBRC 14291 / NCTC 11154) (Bacteroides vulgatus).